The chain runs to 345 residues: S-adenosylmethionine:tRNA ribosyltransferase-isomerase (345 aa).

The protein belongs to the QueA family. In terms of assembly, monomer.

It localises to the cytoplasm. It carries out the reaction 7-aminomethyl-7-carbaguanosine(34) in tRNA + S-adenosyl-L-methionine = epoxyqueuosine(34) in tRNA + adenine + L-methionine + 2 H(+). It participates in tRNA modification; tRNA-queuosine biosynthesis. Transfers and isomerizes the ribose moiety from AdoMet to the 7-aminomethyl group of 7-deazaguanine (preQ1-tRNA) to give epoxyqueuosine (oQ-tRNA). This chain is S-adenosylmethionine:tRNA ribosyltransferase-isomerase, found in Helicobacter acinonychis (strain Sheeba).